Consider the following 591-residue polypeptide: MKLKVYADRMSQPSRAVLIFCKVNEIQFDEILISLGKRQQLSPEFKEINPMGKVPAIVDGRLKLFESHAILIYLSSAYASVVDHWYPNDLSKRAKIHSVLDWHHTNLRPGASGYVLNSVLAPALGLPLNPKAAAEAENILTNSLSTLETFWLKGSAKFLLGGKQPSIADLSLVCELMQLQVLDDKDRLRLLSPHKKVEQWIESTRKATMPHSDEVHEVLFRAKDRFQKQREMATASKPGPQSKIIQFSSIGGTSDGPNLVQDTTDRKARRRKWSPPDDVILISAWLNTSKDRKVVVYDEQQAHTFWKRIGAHVSNSASLANLPKREWNHCRQRWRKINDYVCKFVGCYDQALNQRASGQSEDDVFQVAYQLYYNNYMSNFKLEHAWRELRHNKKWCSTYTSENSKGGGSSKRTKLNGGGVYSSSCNPESVPIALDGEEQVMDRPLGVKSSKQKEKKVATKTMLEEREADSRSRLENLWVLDEEEQVMDLPLGVKSSKQKERKVATKTMIEEREAANFRSRLGNLWLLKEKEEREADSRSRLENLWALKEKDIEEQKKLTRMEVLKSLLGRRTGETSEKEETLKNKLIDEML.

The 82-residue stretch at 1–82 folds into the GST N-terminal domain; the sequence is MKLKVYADRM…YLSSAYASVV (82 aa). Glutathione is bound by residues 11 to 12, 40 to 41, 53 to 54, and 66 to 67; these read SQ, QL, KV, and ES. The region spanning 89–226 is the GST C-terminal domain; it reads DLSKRAKIHS…EVLFRAKDRF (138 aa). The segment at 229-272 is disordered; sequence QREMATASKPGPQSKIIQFSSIGGTSDGPNLVQDTTDRKARRRK. Positions 243-262 are enriched in polar residues; the sequence is KIIQFSSIGGTSDGPNLVQD. Positions 265 to 338 constitute a Myb-like domain; that stretch reads DRKARRRKWS…HCRQRWRKIN (74 aa).

This sequence belongs to the GST superfamily. Theta family.

The protein resides in the peroxisome. The enzyme catalyses RX + glutathione = an S-substituted glutathione + a halide anion + H(+). Functionally, may be involved in the conjugation of reduced glutathione to a wide number of exogenous and endogenous hydrophobic electrophiles and have a detoxification role against certain herbicides. This Arabidopsis thaliana (Mouse-ear cress) protein is Glutathione S-transferase T2 (GSTT2).